Reading from the N-terminus, the 403-residue chain is Blue light- and temperature-regulated antirepressor BluF (403 aa).

A BLUF domain is found at 2–93 (LTTLIYRSHI…ARRFGKAGME (92 aa)). The segment at 98–144 (RLHERDDVLQAVFDKGTSKFQLTYDDRALQFFRTFVLATEQSTYFEI) is joining helix. Positions 155–403 (DGSDKELDSC…IPSIAWPEKK (249 aa)) constitute an EAL domain.

As to quaternary structure, monomer, it undergoes transient dimerization following photoexcitation or upon temperature reduction, with a relaxation time of about 2 minutes. The dimer may be the inactive state. Interacts with the N- and C-terminal domains of BluR. Can also interact with the C-terminal domain of MlrA. FAD serves as cofactor.

Its function is as follows. Binds to and releases the BluR repressor from its bound DNA target in a blue light-dependent (470 nm) fashion. A shift to low temperature also triggers a BluF-mediated relief of repression by BluR, suggesting BluF may serve as a thermometer. Blue light may act to increase the affinity of BluF for BluR, allowing it to be released from its operator. The protein has a reversible photocycle, and undergoes structural changes, probably in the EAL domain, in response to light. In Escherichia coli (strain K12), this protein is Blue light- and temperature-regulated antirepressor BluF.